Consider the following 465-residue polypeptide: UDP-N-acetylmuramate--L-alanine ligase (465 aa).

112–118 (GTHGKTT) contributes to the ATP binding site.

It belongs to the MurCDEF family.

Its subcellular location is the cytoplasm. It catalyses the reaction UDP-N-acetyl-alpha-D-muramate + L-alanine + ATP = UDP-N-acetyl-alpha-D-muramoyl-L-alanine + ADP + phosphate + H(+). It participates in cell wall biogenesis; peptidoglycan biosynthesis. In terms of biological role, cell wall formation. The polypeptide is UDP-N-acetylmuramate--L-alanine ligase (Burkholderia multivorans (strain ATCC 17616 / 249)).